The primary structure comprises 474 residues: Dihydrolipoyl dehydrogenase (474 aa).

FAD-binding positions include 34 to 42 (EKEKLGGTC), Lys51, and Gly114. A disulfide bridge links Cys42 with Cys47. NAD(+) contacts are provided by residues 188-192 (GGGVI), Glu211, Val245, and 278-281 (SIGR). Asp320 and Ala328 together coordinate FAD. His453 functions as the Proton acceptor in the catalytic mechanism.

Belongs to the class-I pyridine nucleotide-disulfide oxidoreductase family. In terms of assembly, homodimer. Requires FAD as cofactor.

It is found in the cytoplasm. It carries out the reaction N(6)-[(R)-dihydrolipoyl]-L-lysyl-[protein] + NAD(+) = N(6)-[(R)-lipoyl]-L-lysyl-[protein] + NADH + H(+). In terms of biological role, the branched-chain alpha-keto dehydrogenase complex catalyzes the overall conversion of alpha-keto acids to acyl-CoA and CO(2). It contains multiple copies of 3 enzymatic components: branched-chain alpha-keto acid decarboxylase (E1), lipoamide acyltransferase (E2) and lipoamide dehydrogenase (E3). The protein is Dihydrolipoyl dehydrogenase (bfmBC) of Bacillus subtilis (strain 168).